Consider the following 146-residue polypeptide: 3-hydroxyacyl-[acyl-carrier-protein] dehydratase FabZ (146 aa).

Histidine 49 is a catalytic residue.

The protein belongs to the thioester dehydratase family. FabZ subfamily.

The protein localises to the cytoplasm. It carries out the reaction a (3R)-hydroxyacyl-[ACP] = a (2E)-enoyl-[ACP] + H2O. Its function is as follows. Involved in unsaturated fatty acids biosynthesis. Catalyzes the dehydration of short chain beta-hydroxyacyl-ACPs and long chain saturated and unsaturated beta-hydroxyacyl-ACPs. In Pseudomonas fluorescens (strain ATCC BAA-477 / NRRL B-23932 / Pf-5), this protein is 3-hydroxyacyl-[acyl-carrier-protein] dehydratase FabZ.